Consider the following 347-residue polypeptide: Methylthioribose-1-phosphate isomerase (347 aa).

Substrate contacts are provided by residues 46 to 48, arginine 89, and glutamine 196; that span reads RGA. Catalysis depends on aspartate 237, which acts as the Proton donor. Position 247–248 (247–248) interacts with substrate; the sequence is NK.

Belongs to the eIF-2B alpha/beta/delta subunits family. MtnA subfamily.

It carries out the reaction 5-(methylsulfanyl)-alpha-D-ribose 1-phosphate = 5-(methylsulfanyl)-D-ribulose 1-phosphate. It functions in the pathway amino-acid biosynthesis; L-methionine biosynthesis via salvage pathway; L-methionine from S-methyl-5-thio-alpha-D-ribose 1-phosphate: step 1/6. Functionally, catalyzes the interconversion of methylthioribose-1-phosphate (MTR-1-P) into methylthioribulose-1-phosphate (MTRu-1-P). This chain is Methylthioribose-1-phosphate isomerase, found in Chloroflexus aurantiacus (strain ATCC 29366 / DSM 635 / J-10-fl).